The following is a 187-amino-acid chain: Large ribosomal subunit protein uL10 (187 aa).

The protein belongs to the universal ribosomal protein uL10 family. Part of the ribosomal stalk of the 50S ribosomal subunit. The N-terminus interacts with L11 and the large rRNA to form the base of the stalk. The C-terminus forms an elongated spine to which L12 dimers bind in a sequential fashion forming a multimeric L10(L12)X complex.

Its function is as follows. Forms part of the ribosomal stalk, playing a central role in the interaction of the ribosome with GTP-bound translation factors. In Roseiflexus castenholzii (strain DSM 13941 / HLO8), this protein is Large ribosomal subunit protein uL10.